Here is a 99-residue protein sequence, read N- to C-terminus: Goannatyrotoxin-Vere1 (99 aa).

An N-terminal signal peptide occupies residues 1-28 (MIASMKPWPLVMVAALCILFCLGTLVDA). Tyr-64 carries the tyrosine amide modification. The propeptide at 68 to 99 (SSPETLMSELIFGENSNSDHSSRSRFDDSYMW) is C-terminal extension.

This sequence belongs to the NPY family. In terms of tissue distribution, expressed by the mandibular venom gland.

It localises to the secreted. Functionally, shows a potent unique triphasic action, rapid biphasic hypertension followed by prolonged hypotension. This is Goannatyrotoxin-Vere1 from Varanus eremius (Rusty desert monitor).